Consider the following 157-residue polypeptide: Lipoprotein signal peptidase (157 aa).

A run of 4 helical transmembrane segments spans residues 10 to 30 (LVFI…KHAI), 36 to 56 (YESL…FSLL), 58 to 78 (FLEG…FIFL), and 84 to 104 (LFKN…SNVL). Residues D114 and D131 contribute to the active site. Residues 122-142 (FDFAIFNFADVMIDVGVGVLL) traverse the membrane as a helical segment.

This sequence belongs to the peptidase A8 family.

It localises to the cell inner membrane. It catalyses the reaction Release of signal peptides from bacterial membrane prolipoproteins. Hydrolyzes -Xaa-Yaa-Zaa-|-(S,diacylglyceryl)Cys-, in which Xaa is hydrophobic (preferably Leu), and Yaa (Ala or Ser) and Zaa (Gly or Ala) have small, neutral side chains.. Its pathway is protein modification; lipoprotein biosynthesis (signal peptide cleavage). Its function is as follows. This protein specifically catalyzes the removal of signal peptides from prolipoproteins. This is Lipoprotein signal peptidase from Helicobacter pylori (strain P12).